Consider the following 232-residue polypeptide: 5'-methylthioadenosine/S-adenosylhomocysteine nucleosidase (232 aa).

The active-site Proton acceptor is the Glu-12. Substrate-binding positions include Gly-78, Ile-152, and 173–174 (ME). Asp-197 acts as the Proton donor in catalysis.

Belongs to the PNP/UDP phosphorylase family. MtnN subfamily. As to quaternary structure, homodimer.

It carries out the reaction S-adenosyl-L-homocysteine + H2O = S-(5-deoxy-D-ribos-5-yl)-L-homocysteine + adenine. The enzyme catalyses S-methyl-5'-thioadenosine + H2O = 5-(methylsulfanyl)-D-ribose + adenine. The catalysed reaction is 5'-deoxyadenosine + H2O = 5-deoxy-D-ribose + adenine. It functions in the pathway amino-acid biosynthesis; L-methionine biosynthesis via salvage pathway; S-methyl-5-thio-alpha-D-ribose 1-phosphate from S-methyl-5'-thioadenosine (hydrolase route): step 1/2. In terms of biological role, catalyzes the irreversible cleavage of the glycosidic bond in both 5'-methylthioadenosine (MTA) and S-adenosylhomocysteine (SAH/AdoHcy) to adenine and the corresponding thioribose, 5'-methylthioribose and S-ribosylhomocysteine, respectively. Also cleaves 5'-deoxyadenosine, a toxic by-product of radical S-adenosylmethionine (SAM) enzymes, into 5-deoxyribose and adenine. Thus, is required for in vivo function of the radical SAM enzymes biotin synthase and lipoic acid synthase, that are inhibited by 5'-deoxyadenosine accumulation. In Erwinia tasmaniensis (strain DSM 17950 / CFBP 7177 / CIP 109463 / NCPPB 4357 / Et1/99), this protein is 5'-methylthioadenosine/S-adenosylhomocysteine nucleosidase.